A 185-amino-acid polypeptide reads, in one-letter code: Ribosome-recycling factor (185 aa).

The protein belongs to the RRF family.

It is found in the cytoplasm. Responsible for the release of ribosomes from messenger RNA at the termination of protein biosynthesis. May increase the efficiency of translation by recycling ribosomes from one round of translation to another. The polypeptide is Ribosome-recycling factor (Aliivibrio fischeri (strain MJ11) (Vibrio fischeri)).